We begin with the raw amino-acid sequence, 202 residues long: Probable molybdenum cofactor guanylyltransferase (202 aa).

GTP-binding positions include 9–11, K22, N50, D77, and D102; that span reads VAG. D102 provides a ligand contact to Mg(2+).

The protein belongs to the MobA family. It depends on Mg(2+) as a cofactor.

It is found in the cytoplasm. The enzyme catalyses Mo-molybdopterin + GTP + H(+) = Mo-molybdopterin guanine dinucleotide + diphosphate. In terms of biological role, transfers a GMP moiety from GTP to Mo-molybdopterin (Mo-MPT) cofactor (Moco or molybdenum cofactor) to form Mo-molybdopterin guanine dinucleotide (Mo-MGD) cofactor. The protein is Probable molybdenum cofactor guanylyltransferase of Natronomonas pharaonis (strain ATCC 35678 / DSM 2160 / CIP 103997 / JCM 8858 / NBRC 14720 / NCIMB 2260 / Gabara) (Halobacterium pharaonis).